A 152-amino-acid polypeptide reads, in one-letter code: Methylglyoxal synthase (152 aa).

In terms of domain architecture, MGS-like spans 6 to 152 (RTLATEKNIA…YEGYLKERLK (147 aa)). Substrate is bound by residues H19, K23, 45-48 (TGTT), and 65-66 (SG). D71 functions as the Proton donor/acceptor in the catalytic mechanism. H98 contacts substrate.

Belongs to the methylglyoxal synthase family.

The enzyme catalyses dihydroxyacetone phosphate = methylglyoxal + phosphate. In terms of biological role, catalyzes the formation of methylglyoxal from dihydroxyacetone phosphate. This is Methylglyoxal synthase from Proteus mirabilis (strain HI4320).